The chain runs to 617 residues: V-type proton ATPase catalytic subunit A (617 aa).

250–257 (GAFGCGKT) provides a ligand contact to ATP. S384 carries the post-translational modification Phosphoserine; by AMPK.

It belongs to the ATPase alpha/beta chains family. As to quaternary structure, V-ATPase is a heteromultimeric enzyme made up of two complexes: the ATP-hydrolytic V1 complex and the proton translocation V0 complex. The V1 complex consists of three catalytic AB heterodimers that form a heterohexamer, three peripheral stalks each consisting of EG heterodimers, one central rotor including subunits D and F, and the regulatory subunits C and H. The proton translocation complex V0 consists of the proton transport subunit a, a ring of proteolipid subunits c9c'', rotary subunit d, subunits e and f, and the accessory subunits ATP6AP1/Ac45 and ATP6AP2/PRR. Interacts with the V0 complex V-ATPase subunit a4 ATP6V0A4. Interacts with WFS1. Interacts with alpha-crystallin B chain/CRYAB and with MTOR, forming a ternary complex. Post-translationally, phosphorylation at Ser-384 by AMPK down-regulates its enzyme activity.

The protein resides in the cytoplasm. It is found in the cytosol. Its subcellular location is the cytoplasmic vesicle. The protein localises to the secretory vesicle. It localises to the clathrin-coated vesicle membrane. The protein resides in the lysosome. It carries out the reaction ATP + H2O + 4 H(+)(in) = ADP + phosphate + 5 H(+)(out). Its activity is regulated as follows. ATP hydrolysis occurs at the interface between the nucleotide-binding domains of subunits A and B. ATP hydrolysis triggers a conformational change in the subunits D and F, which induces a shift of subunit d. The c-ring is subsequently rotated and results in a continuous proton translocation across the membrane. Catalytic subunit of the V1 complex of vacuolar(H+)-ATPase (V-ATPase), a multisubunit enzyme composed of a peripheral complex (V1) that hydrolyzes ATP and a membrane integral complex (V0) that translocates protons. V-ATPase is responsible for acidifying and maintaining the pH of intracellular compartments and in some cell types, is targeted to the plasma membrane, where it is responsible for acidifying the extracellular environment. In aerobic conditions, involved in intracellular iron homeostasis, thus triggering the activity of Fe(2+) prolyl hydroxylase (PHD) enzymes, and leading to HIF1A hydroxylation and subsequent proteasomal degradation. May play a role in neurite development and synaptic connectivity. The protein is V-type proton ATPase catalytic subunit A (Atp6v1a) of Mus musculus (Mouse).